Reading from the N-terminus, the 461-residue chain is Ufm1-specific protease 2 (461 aa).

Residues Cys294, Asp418, and His420 contribute to the active site.

The protein belongs to the peptidase C78 family. In terms of tissue distribution, expressed at high level in brain, kidney, stomach, skeletal muscle, liver, pancreas, spleen and testis.

It localises to the endoplasmic reticulum. Its subcellular location is the cytoplasm. The protein localises to the nucleus. Its function is as follows. Thiol-dependent isopeptidase that specifically cleaves UFM1, a ubiquitin-like modifier protein, from conjugated proteins, such as CD274/PD-L1, CYB5R3, DDRGK1, MRE11, RPL26/uL24, TRIP4 and RPL26/uL24. While it is also able to mediate the processing of UFM1 precursors, a prerequisite for conjugation reactions, UFSP2 mainly acts as a protein deUFMylase that mediates deconjugation of UFM1 from target proteins. Mediates deUFMylation of RPL26/uL24, a critical step to release the UFM1 ribosome E3 ligase (UREL) complex during the recycling of 60S ribosome subunits from the endoplasmic reticulum. Catalyzes deUFMylation of TRIP4, regulating intracellular nuclear receptors transactivation and thereby regulate cell proliferation and differentiation. In Mus musculus (Mouse), this protein is Ufm1-specific protease 2.